The sequence spans 652 residues: Sodium-dependent nutrient amino acid transporter 1 (652 aa).

Residues 1–54 (MELKGVHQQNGTSNGTGAVGAEGESAPPTAPATAEAAASLETTTEKVDAEQQKP) form a disordered region. Residues 1 to 58 (MELKGVHQQNGTSNGTGAVGAEGESAPPTAPATAEAAASLETTTEKVDAEQQKPERTN) are Cytoplasmic-facing. The segment covering 7–16 (HQQNGTSNGT) has biased composition (polar residues). Residues 21–42 (AEGESAPPTAPATAEAAASLET) are compositionally biased toward low complexity. Basic and acidic residues predominate over residues 43-54 (TTEKVDAEQQKP). Helical transmembrane passes span 59–79 (WGNGLEFLMSCISVSVGLGNV), 92–112 (GAFLIPYIIVLFLIGKPMYYL), 130–150 (VVPGFVGVGYGQAFATICIIT), and 155–175 (LLALTLYYLFVSFQSVLPWSY). N-linked (GlcNAc...) asparagine glycans are attached at residues N201 and N204. 9 helical membrane passes run 240 to 260 (PDWKLTLALFVSWVVIFLVIM), 269 to 289 (AAYFLALFPYVVLFILLVRAV), 318 to 338 (AVVQCFFSLAVGSGPIIMFAS), 352 to 372 (IVTTLDTLTSLLGGITIFAIL), 412 to 432 (LFSVLFFFMLFVLGIGSIVAL), 458 to 478 (ICGFLMGLVYVTPGGQWILTL), 485 to 505 (TYVVFILAIFELAGIVWIYGM), 527 to 547 (CWSFFTPVMMIVIFIYSMVTI), and 564 to 584 (AGWLLFGIGAAQFPLWWMWYI).

Belongs to the sodium:neurotransmitter symporter (SNF) (TC 2.A.22) family.

Its subcellular location is the membrane. Its function is as follows. Unusual broad substrate spectrum amino acid:sodium cotransporter that promotes absorption of the D isomers of essential amino acids. Neutral amino acids are the preferred substrates, especially methionine and phenylalanine. The polypeptide is Sodium-dependent nutrient amino acid transporter 1 (Drosophila persimilis (Fruit fly)).